The primary structure comprises 350 residues: Hydroxymethylglutaryl-CoA synthase (350 aa).

Glutamate 83 functions as the Proton donor/acceptor in the catalytic mechanism. The active-site Acyl-thioester intermediate is the cysteine 115. Residues cysteine 115 and threonine 156 each coordinate (3S)-3-hydroxy-3-methylglutaryl-CoA. Arginine 204 serves as a coordination point for CoA. 2 residues coordinate (3S)-3-hydroxy-3-methylglutaryl-CoA: threonine 206 and histidine 239. Histidine 239 serves as the catalytic Proton donor/acceptor. Residue lysine 244 participates in CoA binding. (3S)-3-hydroxy-3-methylglutaryl-CoA is bound by residues asparagine 271 and serine 301.

This sequence belongs to the thiolase-like superfamily. Archaeal HMG-CoA synthase family. In terms of assembly, interacts with acetoacetyl-CoA thiolase that catalyzes the precedent step in the pathway and with a DUF35 protein. The acetoacetyl-CoA thiolase/HMG-CoA synthase complex channels the intermediate via a fused CoA-binding site, which allows for efficient coupling of the endergonic thiolase reaction with the exergonic HMGCS reaction.

The catalysed reaction is acetoacetyl-CoA + acetyl-CoA + H2O = (3S)-3-hydroxy-3-methylglutaryl-CoA + CoA + H(+). The protein operates within metabolic intermediate biosynthesis; (R)-mevalonate biosynthesis; (R)-mevalonate from acetyl-CoA: step 2/3. In terms of biological role, catalyzes the condensation of acetyl-CoA with acetoacetyl-CoA to form 3-hydroxy-3-methylglutaryl-CoA (HMG-CoA). Functions in the mevalonate (MVA) pathway leading to isopentenyl diphosphate (IPP), a key precursor for the biosynthesis of isoprenoid compounds that are building blocks of archaeal membrane lipids. The polypeptide is Hydroxymethylglutaryl-CoA synthase (Thermococcus onnurineus (strain NA1)).